The following is a 313-amino-acid chain: tRNA dimethylallyltransferase (313 aa).

Position 10 to 17 (10 to 17 (GPTASGKT)) interacts with ATP. 12 to 17 (TASGKT) provides a ligand contact to substrate. Interaction with substrate tRNA stretches follow at residues 35–38 (DSAM), 159–163 (QRIQR), and 240–245 (RCVGYR).

It belongs to the IPP transferase family. Monomer. Mg(2+) is required as a cofactor.

It carries out the reaction adenosine(37) in tRNA + dimethylallyl diphosphate = N(6)-dimethylallyladenosine(37) in tRNA + diphosphate. Functionally, catalyzes the transfer of a dimethylallyl group onto the adenine at position 37 in tRNAs that read codons beginning with uridine, leading to the formation of N6-(dimethylallyl)adenosine (i(6)A). This Legionella pneumophila subsp. pneumophila (strain Philadelphia 1 / ATCC 33152 / DSM 7513) protein is tRNA dimethylallyltransferase.